Reading from the N-terminus, the 627-residue chain is Altered inheritance of mitochondria protein 9, mitochondrial (627 aa).

The N-terminal 43 residues, M1–V43, are a transit peptide targeting the mitochondrion.

Belongs to the AIM9 family.

It localises to the mitochondrion. This chain is Altered inheritance of mitochondria protein 9, mitochondrial (AIM9), found in Saccharomyces cerevisiae (strain JAY291) (Baker's yeast).